Here is a 164-residue protein sequence, read N- to C-terminus: Ribosome maturation factor RimM (164 aa).

The PRC barrel domain occupies 92-164 (PDSEYYVANL…FVVIVPPEFI (73 aa)).

The protein belongs to the RimM family. As to quaternary structure, binds ribosomal protein uS19.

The protein localises to the cytoplasm. Its function is as follows. An accessory protein needed during the final step in the assembly of 30S ribosomal subunit, possibly for assembly of the head region. Essential for efficient processing of 16S rRNA. May be needed both before and after RbfA during the maturation of 16S rRNA. It has affinity for free ribosomal 30S subunits but not for 70S ribosomes. This Orientia tsutsugamushi (strain Ikeda) (Rickettsia tsutsugamushi) protein is Ribosome maturation factor RimM.